Reading from the N-terminus, the 537-residue chain is uncharacterized protein (537 aa).

The protein belongs to the RuBisCO large chain family. Type IV subfamily.

In terms of biological role, unknown. Probably does not have RuBisCO activity. This is an uncharacterized protein from Symbiodinium sp. (Dinoflagellate).